A 428-amino-acid polypeptide reads, in one-letter code: Serine--tRNA ligase (428 aa).

235–237 (TAE) contacts L-serine. 266–268 (RSE) serves as a coordination point for ATP. Glu289 contacts L-serine. 353 to 356 (EISS) serves as a coordination point for ATP. An L-serine-binding site is contributed by Ser389.

It belongs to the class-II aminoacyl-tRNA synthetase family. Type-1 seryl-tRNA synthetase subfamily. Homodimer. The tRNA molecule binds across the dimer.

The protein localises to the cytoplasm. The enzyme catalyses tRNA(Ser) + L-serine + ATP = L-seryl-tRNA(Ser) + AMP + diphosphate + H(+). It carries out the reaction tRNA(Sec) + L-serine + ATP = L-seryl-tRNA(Sec) + AMP + diphosphate + H(+). Its pathway is aminoacyl-tRNA biosynthesis; selenocysteinyl-tRNA(Sec) biosynthesis; L-seryl-tRNA(Sec) from L-serine and tRNA(Sec): step 1/1. Its function is as follows. Catalyzes the attachment of serine to tRNA(Ser). Is also able to aminoacylate tRNA(Sec) with serine, to form the misacylated tRNA L-seryl-tRNA(Sec), which will be further converted into selenocysteinyl-tRNA(Sec). The polypeptide is Serine--tRNA ligase (Shewanella sediminis (strain HAW-EB3)).